The following is a 730-amino-acid chain: Protein groucho (730 aa).

Residues 144–411 (QVPGGPPQPM…GKPAYSFHMN (268 aa)) form a disordered region. Basic and acidic residues predominate over residues 198-233 (AEERLRNSVSPADREKYRTRSPLDIENDSKRRKDEK). 3 positions are modified to phosphoserine: Ser205, Ser207, and Ser218. Residues 206–267 (VSPADREKYR…SPRPNGEHVS (62 aa)) form a CCN domain region. Residues 227–230 (KRRK) carry the Nuclear localization signal motif. Ser242 bears the Phosphoserine; by CK2 mark. Residues 254-283 (MESHSPRPNGEHVSMEVRDRESLNGERLEK) show a composition bias toward basic and acidic residues. Position 258 is a phosphoserine; by CDC2 (Ser258). The interval 262–425 (NGEHVSMEVR…LQPVPFPPDA (164 aa)) is binding to basic helix-loop-helix domain. Ser267 carries the phosphoserine modification. Low complexity-rich tracts occupy residues 296 to 308 (SRSG…STPS), 322 to 345 (AKAR…QMMP), and 353 to 362 (YPGAPYQRPA). Phosphothreonine occurs at positions 326 and 328. Over residues 366-382 (QRPPSDPAYGRPPPMPY) the composition is skewed to pro residues. 7 WD repeats span residues 442 to 480 (SHGE…NKNP), 488 to 527 (QRDN…PRIK), 532 to 571 (SAAP…LVRQ), 574 to 613 (GHTD…QLQQ), 615 to 654 (DFSS…KYQL), 656 to 695 (LHES…SIFQ), and 697 to 730 (KETS…EVIY).

Belongs to the WD repeat Groucho/TLE family. Forms a complex with the hairy/Enhancer of split/deadpan family of basic helix-loop-helix proteins in order to repress transcription. Its activity in regulating transcription depends on other proteins as it lacks a DNA-binding motif. Interacts with hairy/hry (via WRPW motif). Ubiquitinated by XIAP/BIRC4. Ubiquitinated by hyd in response to Wnt signaling, leading to degradation by the proteasome.

It localises to the nucleus. In terms of biological role, transcriptional corepressor that regulates transcription when recruited to specific target DNA by hairy-related bHLH proteins. Maternally required for neurogenesis; in the segregation of the neuroectoderm. Directly or indirectly interacts with Notch and Delta. In Drosophila melanogaster (Fruit fly), this protein is Protein groucho (gro).